Consider the following 274-residue polypeptide: NAD-dependent protein deacetylase (274 aa).

One can recognise a Deacetylase sirtuin-type domain in the interval 1-274 (MDSRMSDLQA…CDEVLAEVVP (274 aa)). NAD(+) contacts are provided by residues 26–46 (GAGC…GQWK) and 104–107 (QNVD). His-122 functions as the Proton acceptor in the catalytic mechanism. Positions 130, 133, 181, and 184 each coordinate Zn(2+). Residues 221–223 (GSS), 247–249 (NLG), and Cys-265 contribute to the NAD(+) site.

This sequence belongs to the sirtuin family. Class II subfamily. Zn(2+) is required as a cofactor.

It is found in the cytoplasm. It catalyses the reaction N(6)-acetyl-L-lysyl-[protein] + NAD(+) + H2O = 2''-O-acetyl-ADP-D-ribose + nicotinamide + L-lysyl-[protein]. NAD-dependent protein deacetylase which modulates the activities of several enzymes which are inactive in their acetylated form. This is NAD-dependent protein deacetylase from Bordetella pertussis (strain Tohama I / ATCC BAA-589 / NCTC 13251).